Consider the following 492-residue polypeptide: N-succinylglutamate 5-semialdehyde dehydrogenase (492 aa).

An NAD(+)-binding site is contributed by 220 to 225 (GSANTG). Active-site residues include Glu243 and Cys277.

It belongs to the aldehyde dehydrogenase family. AstD subfamily.

It carries out the reaction N-succinyl-L-glutamate 5-semialdehyde + NAD(+) + H2O = N-succinyl-L-glutamate + NADH + 2 H(+). Its pathway is amino-acid degradation; L-arginine degradation via AST pathway; L-glutamate and succinate from L-arginine: step 4/5. Catalyzes the NAD-dependent reduction of succinylglutamate semialdehyde into succinylglutamate. The sequence is that of N-succinylglutamate 5-semialdehyde dehydrogenase from Escherichia coli O9:H4 (strain HS).